Reading from the N-terminus, the 33-residue chain is MSDIN-like toxin proprotein 2 (33 aa).

Residues 1–10 (MSDINATRLP) constitute a propeptide that is removed on maturation. A cross-link (cyclopeptide (Ile-Pro)) is located at residues 11-18 (IILAPIIP). A propeptide spanning residues 19-33 (CINDDVNSTLTSGER) is cleaved from the precursor.

The protein belongs to the MSDIN fungal toxin family. In terms of processing, processed by the macrocyclase-peptidase enzyme POPB to yield a toxic cyclic octapeptide. POPB first removes 10 residues from the N-terminus. Conformational trapping of the remaining peptide forces the enzyme to release this intermediate rather than proceed to macrocyclization. The enzyme rebinds the remaining peptide in a different conformation and catalyzes macrocyclization of the N-terminal 8 residues.

Probable toxin that belongs to the MSDIN-like toxin family responsible for a large number of food poisoning cases and deaths. This Amanita phalloides (Death cap) protein is MSDIN-like toxin proprotein 2.